The sequence spans 507 residues: MAVCARLCGVGPARGCRRRQQRRGPAETAAADSEADTDPEEERIEAGPARCSLLELPPELLVEIFASLPGTDLPSLAQVCSRFRRILHTDTIWRRRCREEYGVCENLRKLEITGVSCRDVYAKLLHRYRHILGLWQPDIGPYGGLLNVVVDGLFIIGWMYLPPHDPHVGDPMRFKPLFRIHLMERKSATVECMYGHKGPHNGHIQIVKRDEFSTKCNQTDHHRMSGGRQEEFRTWLREEWGRTLEDIFHEHMQELILMKFIYTSQYDNCLTYRRIYLPPSHPDDLIKPGLFKGTYGSHGLEIVMLSFHGSRARGTKITGDPNIPAGQQTVEIDLQRRIQLPDVENLRNFNELSRIVLEVREQVRQEQEAGEGAAPPREPSAKAADGPPAKDGKEPGGGAEAAEQSASSGQGQPFVLPVGVSSRNEDYPRTCRLCFYGTGLIAGHGFTSPERTPGVFVLFDEDRFGFLWLELKSFSLYSRVQATFQNAAAPSPQAFDEMLRNIQSLTS.

Positions 19–42 are disordered; that stretch reads RQQRRGPAETAAADSEADTDPEEE. S33 is subject to Phosphoserine. Positions 33–42 are enriched in acidic residues; that stretch reads SEADTDPEEE. Position 37 is a phosphothreonine (T37). The D box motif lies at 50–55; the sequence is RCSLLE. One can recognise an F-box domain in the interval 50 to 96; it reads RCSLLELPPELLVEIFASLPGTDLPSLAQVCSRFRRILHTDTIWRRR. Zn(2+) contacts are provided by C192, H200, C216, and H222. Position 264 is a phosphoserine; by ATM (S264). The DDL motif motif lies at 283-285; that stretch reads DDL. Residues 366–417 form a disordered region; the sequence is EQEAGEGAAPPREPSAKAADGPPAKDGKEPGGGAEAAEQSASSGQGQPFVLP. Residues 400–412 are compositionally biased toward low complexity; it reads EAAEQSASSGQGQ. S448 is subject to Phosphoserine.

This sequence belongs to the FBXO31 family. As to quaternary structure, part of a SCF (SKP1-cullin-F-box) protein ligase complex SCF(FBXO31) composed of CUL1, SKP1, RBX1 and FBXO31. Interacts (when phosphorylated at Ser-33) with CDC20, promoting ubiquitination by the APC/C complex. Phosphorylation at Ser-264 by ATM following gamma-irradiation results in its stabilization. Phosphorylation at Ser-448 in absence of stress promotes its ubiquitination and degradation by the SCF(FBXO46) complex. Phosphorylation at Ser-33 by AKT1 promotes association with CDC20 and ubiquitination by the APC/C complex. In terms of processing, ubiquitinated by the SCF(FBXO46) complex in absence of stress, promoting its degradation. Ubiquitinated by the APC/C complex following phosphorylation at Ser-33, leading to its degradation by the proteasome.

It is found in the cytoplasm. Its subcellular location is the cytoskeleton. The protein resides in the microtubule organizing center. The protein localises to the centrosome. It functions in the pathway protein modification; protein ubiquitination. Substrate-recognition component of the SCF(FBXO31) protein ligase complex, which specifically mediates the ubiquitination of proteins amidated at their C-terminus in response to oxidative stress, leading to their degradation by the proteasome. FBXO31 specifically recognizes and binds C-terminal peptides bearing an amide: C-terminal amidation in response to oxidative stress takes place following protein fragmentation. The SCF(FBXO31) also plays a role in G1 arrest following DNA damage by mediating ubiquitination of phosphorylated cyclin-D1 (CCND1), promoting its degradation by the proteasome, resulting in G1 arrest. The SCF(FBXO31) complex is however not a major regulator of CCND1 stability during the G1/S transition. In response to genotoxic stress, the SCF(FBXO31) complex directs ubiquitination and degradation of phosphorylated MDM2, thereby promoting p53/TP53-mediated DNA damage response. SCF(FBXO31) complex is required for genomic integrity by catalyzing ubiquitination and degradation of cyclin-A (CCNA1 and/or CCNA2) during the G1 phase. In response to genotoxic stress, the SCF(FBXO31) complex directs ubiquitination and degradation of phosphorylated FBXO46 and MAP2K6. SCF(FBXO31) complex promotes ubiquitination and degradation of CDT1 during the G2 phase to prevent re-replication. The SCF(FBXO31) complex also mediates ubiquitination and degradation of DUSP6, OGT and PARD6A. The protein is F-box only protein 31 of Mus musculus (Mouse).